A 108-amino-acid polypeptide reads, in one-letter code: Large ribosomal subunit protein uL22 (108 aa).

Belongs to the universal ribosomal protein uL22 family. In terms of assembly, part of the 50S ribosomal subunit.

Its function is as follows. This protein binds specifically to 23S rRNA; its binding is stimulated by other ribosomal proteins, e.g. L4, L17, and L20. It is important during the early stages of 50S assembly. It makes multiple contacts with different domains of the 23S rRNA in the assembled 50S subunit and ribosome. In terms of biological role, the globular domain of the protein is located near the polypeptide exit tunnel on the outside of the subunit, while an extended beta-hairpin is found that lines the wall of the exit tunnel in the center of the 70S ribosome. In Nitratiruptor sp. (strain SB155-2), this protein is Large ribosomal subunit protein uL22.